Consider the following 265-residue polypeptide: Secreted RxLR effector protein 146 (265 aa).

The N-terminal stretch at 1–25 (MRYYTQVVAASLVATLAVVDSIVFA) is a signal peptide. A RxLR-dEER motif is present at residues 32 to 50 (RFLRQDGATVTRGGKGEER). Residues Asn-71 and Asn-148 are each glycosylated (N-linked (GlcNAc...) asparagine).

This sequence belongs to the RxLR effector family.

Its subcellular location is the secreted. The protein localises to the host nucleus. It is found in the host cytoplasm. Its function is as follows. Secreted effector that completely suppresses the host cell death induced by cell death-inducing proteins. The sequence is that of Secreted RxLR effector protein 146 from Plasmopara viticola (Downy mildew of grapevine).